Reading from the N-terminus, the 159-residue chain is 3-hydroxyacyl-[acyl-carrier-protein] dehydratase FabZ (159 aa).

His58 is an active-site residue.

Belongs to the thioester dehydratase family. FabZ subfamily.

The protein localises to the cytoplasm. The catalysed reaction is a (3R)-hydroxyacyl-[ACP] = a (2E)-enoyl-[ACP] + H2O. Its function is as follows. Involved in unsaturated fatty acids biosynthesis. Catalyzes the dehydration of short chain beta-hydroxyacyl-ACPs and long chain saturated and unsaturated beta-hydroxyacyl-ACPs. The protein is 3-hydroxyacyl-[acyl-carrier-protein] dehydratase FabZ of Helicobacter pylori (strain P12).